The sequence spans 97 residues: MRYTTSFIVFCFYIFLFTNLVQGGLVRICNHRIEGYGTCGPNGRKICLDAFWKNQPSPGLSKNLEGCQCEDRRKRPQFKGLSHSCSCCWSYQGNSDE.

The N-terminal stretch at 1 to 23 (MRYTTSFIVFCFYIFLFTNLVQG) is a signal peptide. Intrachain disulfides connect Cys-29–Cys-88, Cys-39–Cys-69, Cys-47–Cys-85, and Cys-67–Cys-87.

Belongs to the DEFL family.

Its subcellular location is the secreted. The protein is Putative defensin-like protein 240 (SCRL18) of Arabidopsis thaliana (Mouse-ear cress).